Here is a 317-residue protein sequence, read N- to C-terminus: Acetyl-coenzyme A carboxylase carboxyl transferase subunit alpha (317 aa).

The region spanning 39–293 is the CoA carboxyltransferase C-terminal domain; sequence RLESKAAAAL…EEAIAEGLAG (255 aa).

This sequence belongs to the AccA family. Acetyl-CoA carboxylase is a heterohexamer composed of biotin carboxyl carrier protein (AccB), biotin carboxylase (AccC) and two subunits each of ACCase subunit alpha (AccA) and ACCase subunit beta (AccD).

It is found in the cytoplasm. It carries out the reaction N(6)-carboxybiotinyl-L-lysyl-[protein] + acetyl-CoA = N(6)-biotinyl-L-lysyl-[protein] + malonyl-CoA. It functions in the pathway lipid metabolism; malonyl-CoA biosynthesis; malonyl-CoA from acetyl-CoA: step 1/1. In terms of biological role, component of the acetyl coenzyme A carboxylase (ACC) complex. First, biotin carboxylase catalyzes the carboxylation of biotin on its carrier protein (BCCP) and then the CO(2) group is transferred by the carboxyltransferase to acetyl-CoA to form malonyl-CoA. The polypeptide is Acetyl-coenzyme A carboxylase carboxyl transferase subunit alpha (Methylobacterium sp. (strain 4-46)).